A 213-amino-acid polypeptide reads, in one-letter code: MDILWDISPPISAATPVWPGDTPVSVERVWRIEAGSPVNVARLTLSPHTGAHCDAPLHYDADGAAIGAVPLDTYVGPCRVIHCIGASPVVRPADVAAALDGVPPRVLLRTYANAPTAHWDSAFCAVAPDTVDLLAAHGVKLIGIDTPSLDPQESKTMDAHHRVHAHRMAILEGIVLDEVPPGDYELIALPLKFATLDASPVRAVLRALPARAA.

Tryptophan 18 contributes to the substrate binding site. Positions 48, 52, and 54 each coordinate Zn(2+). Histidine 58 (proton donor/acceptor) is an active-site residue. 2 residues coordinate Zn(2+): histidine 160 and glutamate 172.

It belongs to the Cyclase 1 superfamily. KynB family. As to quaternary structure, homodimer. It depends on Zn(2+) as a cofactor.

It carries out the reaction N-formyl-L-kynurenine + H2O = L-kynurenine + formate + H(+). Its pathway is amino-acid degradation; L-tryptophan degradation via kynurenine pathway; L-kynurenine from L-tryptophan: step 2/2. Functionally, catalyzes the hydrolysis of N-formyl-L-kynurenine to L-kynurenine, the second step in the kynurenine pathway of tryptophan degradation. This chain is Kynurenine formamidase, found in Burkholderia multivorans (strain ATCC 17616 / 249).